A 340-amino-acid chain; its full sequence is Fructose-1,6-bisphosphatase class 1 (340 aa).

The Mg(2+) site is built by Glu107, Asp126, Leu128, and Asp129. Asn215 contributes to the substrate binding site. Glu287 provides a ligand contact to Mg(2+).

Belongs to the FBPase class 1 family. Homotetramer. It depends on Mg(2+) as a cofactor.

It localises to the cytoplasm. The enzyme catalyses beta-D-fructose 1,6-bisphosphate + H2O = beta-D-fructose 6-phosphate + phosphate. Its pathway is carbohydrate biosynthesis; gluconeogenesis. This Brucella suis biovar 1 (strain 1330) protein is Fructose-1,6-bisphosphatase class 1.